Consider the following 1287-residue polypeptide: DNA-directed RNA polymerase subunit beta (1287 aa).

This sequence belongs to the RNA polymerase beta chain family. As to quaternary structure, the RNAP catalytic core consists of 2 alpha, 1 beta, 1 beta' and 1 omega subunit. When a sigma factor is associated with the core the holoenzyme is formed, which can initiate transcription.

It carries out the reaction RNA(n) + a ribonucleoside 5'-triphosphate = RNA(n+1) + diphosphate. DNA-dependent RNA polymerase catalyzes the transcription of DNA into RNA using the four ribonucleoside triphosphates as substrates. This is DNA-directed RNA polymerase subunit beta from Mycoplasma capricolum subsp. capricolum (strain California kid / ATCC 27343 / NCTC 10154).